The sequence spans 283 residues: Elongation factor Ts (283 aa).

An involved in Mg(2+) ion dislocation from EF-Tu region spans residues 80–83; the sequence is TDFV.

Belongs to the EF-Ts family.

It is found in the cytoplasm. In terms of biological role, associates with the EF-Tu.GDP complex and induces the exchange of GDP to GTP. It remains bound to the aminoacyl-tRNA.EF-Tu.GTP complex up to the GTP hydrolysis stage on the ribosome. This chain is Elongation factor Ts, found in Salmonella gallinarum (strain 287/91 / NCTC 13346).